We begin with the raw amino-acid sequence, 87 residues long: Protein Tat (87 aa).

Positions 1 to 21 (MDPVDPNLEPWNHPGSQPRTP) are disordered. Residues 1–24 (MDPVDPNLEPWNHPGSQPRTPCNK) form an interaction with human CREBBP region. The transactivation stretch occupies residues 1–48 (MDPVDPNLEPWNHPGSQPRTPCNKCYCKKCCYHCQMCFITKGLGISYG). 3 residues coordinate Zn(2+): Cys22, Cys25, and Cys27. Residues 22 to 37 (CNKCYCKKCCYHCQMC) form a cysteine-rich region. Lys28 carries the post-translational modification N6-acetyllysine; by host PCAF. Cys30, His33, Cys34, and Cys37 together coordinate Zn(2+). The core stretch occupies residues 38–48 (FITKGLGISYG). The disordered stretch occupies residues 45–87 (ISYGRKKRRQRRRPPQGNQAHQDPLPEQPSSQHRGDHPTGPKE). Residues 48–58 (GRKKRRQRRRP) show a composition bias toward basic residues. The Nuclear localization signal, RNA-binding (TAR), and protein transduction signature appears at 49-57 (RKKRRQRRR). The interval 49–87 (RKKRRQRRRPPQGNQAHQDPLPEQPSSQHRGDHPTGPKE) is interaction with the host capping enzyme RNGTT. Residues Lys50 and Lys51 each carry the N6-acetyllysine; by host EP300 and GCN5L2 modification. 2 positions are modified to asymmetric dimethylarginine; by host PRMT6: Arg52 and Arg53. A compositionally biased stretch (basic and acidic residues) spans 77-87 (HRGDHPTGPKE). The Cell attachment site motif lies at 78–80 (RGD).

Belongs to the lentiviruses Tat family. Interacts with host CCNT1. Associates with the P-TEFb complex composed at least of Tat, P-TEFb (CDK9 and CCNT1), TAR RNA, RNA Pol II. Recruits the HATs CREBBP, TAF1/TFIID, EP300, PCAF and GCN5L2. Interacts with host KAT5/Tip60; this interaction targets the latter to degradation. Interacts with the host deacetylase SIRT1. Interacts with host capping enzyme RNGTT; this interaction stimulates RNGTT. Binds to host KDR, and to the host integrins ITGAV/ITGB3 and ITGA5/ITGB1. Interacts with host KPNB1/importin beta-1 without previous binding to KPNA1/importin alpha-1. Interacts with EIF2AK2. Interacts with host nucleosome assembly protein NAP1L1; this interaction may be required for the transport of Tat within the nucleus, since the two proteins interact at the nuclear rim. Interacts with host C1QBP/SF2P32; this interaction involves lysine-acetylated Tat. Interacts with the host chemokine receptors CCR2, CCR3 and CXCR4. Interacts with host DPP4/CD26; this interaction may trigger an anti-proliferative effect. Interacts with host LDLR. Interacts with the host extracellular matrix metalloproteinase MMP1. Interacts with host PRMT6; this interaction mediates Tat's methylation. Interacts with, and is ubiquitinated by MDM2/Hdm2. Interacts with host PSMC3 and HTATIP2. Interacts with STAB1; this interaction may overcome SATB1-mediated repression of IL2 and IL2RA (interleukin) in T cells by binding to the same domain than HDAC1. Interacts (when acetylated) with human CDK13, thereby increasing HIV-1 mRNA splicing and promoting the production of the doubly spliced HIV-1 protein Nef. Interacts with host TBP; this interaction modulates the activity of transcriptional pre-initiation complex. Interacts with host RELA. Interacts with host PLSCR1; this interaction negatively regulates Tat transactivation activity by altering its subcellular distribution. In terms of processing, asymmetrical arginine methylation by host PRMT6 seems to diminish the transactivation capacity of Tat and affects the interaction with host CCNT1. Acetylation by EP300, CREBBP, GCN5L2/GCN5 and PCAF regulates the transactivation activity of Tat. EP300-mediated acetylation of Lys-50 promotes dissociation of Tat from the TAR RNA through the competitive binding to PCAF's bromodomain. In addition, the non-acetylated Tat's N-terminus can also interact with PCAF. PCAF-mediated acetylation of Lys-28 enhances Tat's binding to CCNT1. Lys-50 is deacetylated by SIRT1. Post-translationally, polyubiquitination by host MDM2 does not target Tat to degradation, but activates its transactivation function and fosters interaction with CCNT1 and TAR RNA. In terms of processing, phosphorylated by EIF2AK2 on serine and threonine residues adjacent to the basic region important for TAR RNA binding and function. Phosphorylation of Tat by EIF2AK2 is dependent on the prior activation of EIF2AK2 by dsRNA.

Its subcellular location is the host nucleus. The protein resides in the host nucleolus. It localises to the host cytoplasm. It is found in the secreted. In terms of biological role, transcriptional activator that increases RNA Pol II processivity, thereby increasing the level of full-length viral transcripts. Recognizes a hairpin structure at the 5'-LTR of the nascent viral mRNAs referred to as the transactivation responsive RNA element (TAR) and recruits the cyclin T1-CDK9 complex (P-TEFb complex) that will in turn hyperphosphorylate the RNA polymerase II to allow efficient elongation. The CDK9 component of P-TEFb and other Tat-activated kinases hyperphosphorylate the C-terminus of RNA Pol II that becomes stabilized and much more processive. Other factors such as HTATSF1/Tat-SF1, SUPT5H/SPT5, and HTATIP2 are also important for Tat's function. Besides its effect on RNA Pol II processivity, Tat induces chromatin remodeling of proviral genes by recruiting the histone acetyltransferases (HATs) CREBBP, EP300 and PCAF to the chromatin. This also contributes to the increase in proviral transcription rate, especially when the provirus integrates in transcriptionally silent region of the host genome. To ensure maximal activation of the LTR, Tat mediates nuclear translocation of NF-kappa-B by interacting with host RELA. Through its interaction with host TBP, Tat may also modulate transcription initiation. Tat can reactivate a latently infected cell by penetrating in it and transactivating its LTR promoter. In the cytoplasm, Tat is thought to act as a translational activator of HIV-1 mRNAs. Its function is as follows. Extracellular circulating Tat can be endocytosed by surrounding uninfected cells via the binding to several surface receptors such as CD26, CXCR4, heparan sulfate proteoglycans (HSPG) or LDLR. Neurons are rarely infected, but they internalize Tat via their LDLR. Through its interaction with nuclear HATs, Tat is potentially able to control the acetylation-dependent cellular gene expression. Modulates the expression of many cellular genes involved in cell survival, proliferation or in coding for cytokines or cytokine receptors. Tat plays a role in T-cell and neurons apoptosis. Tat induced neurotoxicity and apoptosis probably contribute to neuroAIDS. Circulating Tat also acts as a chemokine-like and/or growth factor-like molecule that binds to specific receptors on the surface of the cells, affecting many cellular pathways. In the vascular system, Tat binds to ITGAV/ITGB3 and ITGA5/ITGB1 integrins dimers at the surface of endothelial cells and competes with bFGF for heparin-binding sites, leading to an excess of soluble bFGF. This chain is Protein Tat, found in Homo sapiens (Human).